The primary structure comprises 301 residues: tRNA pseudouridine synthase B (301 aa).

D38 (nucleophile) is an active-site residue.

It belongs to the pseudouridine synthase TruB family. Type 1 subfamily.

The catalysed reaction is uridine(55) in tRNA = pseudouridine(55) in tRNA. Its function is as follows. Responsible for synthesis of pseudouridine from uracil-55 in the psi GC loop of transfer RNAs. In Lacticaseibacillus paracasei (strain ATCC 334 / BCRC 17002 / CCUG 31169 / CIP 107868 / KCTC 3260 / NRRL B-441) (Lactobacillus paracasei), this protein is tRNA pseudouridine synthase B.